The sequence spans 133 residues: p53 and DNA damage-regulated protein 1 (133 aa).

This sequence belongs to the prefoldin subunit beta family. Component of the PAQosome complex which is responsible for the biogenesis of several protein complexes and which consists of R2TP complex members RUVBL1, RUVBL2, RPAP3 and PIH1D1, URI complex members PFDN2, PFDN6, PDRG1, UXT and URI1 as well as ASDURF, POLR2E and DNAAF10/WDR92.

It localises to the cytoplasm. In terms of biological role, may play a role in chaperone-mediated protein folding. The chain is p53 and DNA damage-regulated protein 1 (Pdrg1) from Mus musculus (Mouse).